The chain runs to 408 residues: Serine/threonine transporter SstT (408 aa).

The next 10 membrane-spanning stretches (helical) occupy residues 15 to 35 (MGLIPQITIGIIAGVLLAVIW), 49 to 69 (FISALKAVAPILVFALVTAAI), 85 to 105 (LLYVIGTLVAAVVAVIASFVF), 142 to 162 (ALMEGNFIAILAWAVGLGLML), 192 to 212 (PLGIFGLVANTLADAGIGALL), 218 to 238 (LAVIVGCMLFVALVTNPLIVF), 246 to 268 (YPLVFACLRGSAITAFFTRSSAA), 289 to 309 (ISIPLGATINMAGAAITISVI), 317 to 337 (LGIPVDFPTALLLCVVSSIAA), and 362 to 382 (TEVAMQVVAIGFVISVVQDST).

Belongs to the dicarboxylate/amino acid:cation symporter (DAACS) (TC 2.A.23) family.

The protein localises to the cell inner membrane. It carries out the reaction L-serine(in) + Na(+)(in) = L-serine(out) + Na(+)(out). It catalyses the reaction L-threonine(in) + Na(+)(in) = L-threonine(out) + Na(+)(out). Its function is as follows. Involved in the import of serine and threonine into the cell, with the concomitant import of sodium (symport system). In Marinobacter nauticus (strain ATCC 700491 / DSM 11845 / VT8) (Marinobacter aquaeolei), this protein is Serine/threonine transporter SstT.